A 51-amino-acid chain; its full sequence is Lipid-anchored plasma membrane protein CPP3 (51 aa).

Positions 1–28 (MRHHQNMHYAPQQQPVYVQQPPPRRESG) are disordered.

Belongs to the CYSTM1 family. Palmitoylated near the C-terminus.

It localises to the cell membrane. The polypeptide is Lipid-anchored plasma membrane protein CPP3 (Saccharomyces cerevisiae (strain ATCC 204508 / S288c) (Baker's yeast)).